A 486-amino-acid polypeptide reads, in one-letter code: Corytuberine synthase (486 aa).

The chain crosses the membrane as a helical span at residues 6–21; it reads ALFSLIPVILVFILLL. Residue C428 coordinates heme.

Belongs to the cytochrome P450 family. The cofactor is heme.

Its subcellular location is the endoplasmic reticulum membrane. It catalyses the reaction (S)-reticuline + reduced [NADPH--hemoprotein reductase] + O2 = (S)-corytuberine + oxidized [NADPH--hemoprotein reductase] + 2 H2O + 2 H(+). With respect to regulation, inhibited by ketoconazole. Functionally, cytochrome P450 that catalyzes an intramolecular C-C phenol coupling of (S)-reticuline in magnoflorine biosynthesis. Catalyzes the formation of (S)-corytuberine from (S)-reticuline, and also, with a lover efficiency, the 4'-O-demethylation of codamine to produce orientaline, and subsequent C-C-phenol coupling of orientaline. Can also use (R,S)-norreticuline, (R,S)-orientaline, (S)-N-methylcoclaurine and (S)-coclaurine as substrates, but not (R,S)-6-O-methyllaudanosoline, (R,S)-6-O-methylnorlaudanosoline, (R,S)-laudanine, (R,S)-norlaudanine, (R,S)-4'-O-methyllaudanosoline, (R,S)-pseudocodamine, (R,S)-norpseudocodamine, (R,S)-laudanosine, (R,S)-norlaudanosine, (R,S)-laudanosoline or (R,S)-norlaudanosoline. This is Corytuberine synthase from Coptis japonica (Japanese goldthread).